The primary structure comprises 199 residues: Recombination protein RecR (199 aa).

The C4-type zinc-finger motif lies at 58 to 73; the sequence is CSTCNNLTDKDPCTIC. The 96-residue stretch at 81–176 folds into the Toprim domain; it reads NLICVVQDAR…RVTRLAYGLP (96 aa).

The protein belongs to the RecR family.

Functionally, may play a role in DNA repair. It seems to be involved in an RecBC-independent recombinational process of DNA repair. It may act with RecF and RecO. The sequence is that of Recombination protein RecR from Natranaerobius thermophilus (strain ATCC BAA-1301 / DSM 18059 / JW/NM-WN-LF).